The primary structure comprises 201 residues: Recombination protein RecR (201 aa).

The C4-type zinc finger occupies 60-75 (CSVCGNVDTSDPCTIC). Residues 83 to 178 (ATLIVVEDVS…RVTKLAHGVP (96 aa)) form the Toprim domain.

It belongs to the RecR family.

In terms of biological role, may play a role in DNA repair. It seems to be involved in an RecBC-independent recombinational process of DNA repair. It may act with RecF and RecO. In Chelativorans sp. (strain BNC1), this protein is Recombination protein RecR.